Reading from the N-terminus, the 233-residue chain is Glycerol-3-phosphate acyltransferase 5 (233 aa).

Helical transmembrane passes span 3–23, 69–89, 116–136, 143–163, and 168–188; these read LVFI…MAYL, MILL…VGLF, LVMA…FGLF, VFLG…FFGI, and TISW…LMAP.

It belongs to the PlsY family. As to quaternary structure, probably interacts with PlsX.

The protein resides in the cell membrane. The catalysed reaction is an acyl phosphate + sn-glycerol 3-phosphate = a 1-acyl-sn-glycero-3-phosphate + phosphate. Its pathway is lipid metabolism; phospholipid metabolism. Its function is as follows. Catalyzes the transfer of an acyl group from acyl-phosphate (acyl-PO(4)) to glycerol-3-phosphate (G3P) to form lysophosphatidic acid (LPA). This enzyme utilizes acyl-phosphate as fatty acyl donor, but not acyl-CoA or acyl-ACP. The chain is Glycerol-3-phosphate acyltransferase 5 from Dehalococcoides mccartyi (strain ATCC BAA-2266 / KCTC 15142 / 195) (Dehalococcoides ethenogenes (strain 195)).